Here is a 343-residue protein sequence, read N- to C-terminus: Anthranilate phosphoribosyltransferase (343 aa).

5-phospho-alpha-D-ribose 1-diphosphate is bound by residues Gly84, 87 to 88 (GD), Thr92, 94 to 97 (NIST), 112 to 120 (KHGNRGVSS), and Ser124. An anthranilate-binding site is contributed by Gly84. Ser96 serves as a coordination point for Mg(2+). Asn115 is a binding site for anthranilate. Arg170 contacts anthranilate. Asp229 and Glu230 together coordinate Mg(2+).

It belongs to the anthranilate phosphoribosyltransferase family. Homodimer. The cofactor is Mg(2+).

The catalysed reaction is N-(5-phospho-beta-D-ribosyl)anthranilate + diphosphate = 5-phospho-alpha-D-ribose 1-diphosphate + anthranilate. The protein operates within amino-acid biosynthesis; L-tryptophan biosynthesis; L-tryptophan from chorismate: step 2/5. Functionally, catalyzes the transfer of the phosphoribosyl group of 5-phosphorylribose-1-pyrophosphate (PRPP) to anthranilate to yield N-(5'-phosphoribosyl)-anthranilate (PRA). The protein is Anthranilate phosphoribosyltransferase of Burkholderia multivorans (strain ATCC 17616 / 249).